Reading from the N-terminus, the 440-residue chain is 5-hydroxytryptamine receptor 6 (440 aa).

Over 1–27 the chain is Extracellular; the sequence is MVPEPGPSANSTPAWGAGPPSAPGGSG. Residues 28–52 traverse the membrane as a helical segment; that stretch reads WVAAALCVVIALTAAANSLLIALIC. Over 53 to 62 the chain is Cytoplasmic; it reads TQPALRNTSN. The helical transmembrane segment at 63–88 threads the bilayer; sequence FFLVSLFTSDLMVGLVVMPPAMLNAL. Residues 89–96 lie on the Extracellular side of the membrane; it reads YGRWVLAR. A helical membrane pass occupies residues 97 to 122; it reads GLCLLWTAFDVMCCSASILNLCLISL. A disulfide bridge connects residues C99 and C180. D106 is a serotonin binding site. The Cytoplasmic portion of the chain corresponds to 123–142; that stretch reads DRYLLILSPLRYKLRMTPPR. The chain crosses the membrane as a helical span at residues 143-167; it reads ALALVLGAWSLAALASFLPLLLGWH. Residues 168 to 185 lie on the Extracellular side of the membrane; that stretch reads ELGHARPPVPGQCRLLAS. The chain crosses the membrane as a helical span at residues 186 to 209; that stretch reads LPFVLVASGLTFFLPSGAICFTYC. Topologically, residues 210–266 are cytoplasmic; sequence RILLAARKQAVQVASLTTGMASQASETLQVPRTPRPGVESADSRRLATKHSRKALKA. The chain crosses the membrane as a helical span at residues 267–293; the sequence is SLTLGILLGMFFVTWLPFFVANIVQAV. N288 serves as a coordination point for serotonin. Topologically, residues 294 to 299 are extracellular; sequence CDCISP. Residues 300–323 traverse the membrane as a helical segment; it reads GLFDVLTWLGYCNSTMNPIIYPLF. Residues 324 to 440 are Cytoplasmic-facing; that stretch reads MRDFKRALGR…RPHPLGIPTN (117 aa). The tract at residues 346-392 is disordered; the sequence is ASLASPSLRTSHSGPRPGLSLQQVLPLPLPPDSDSDSDAGSGGSSGL. The segment covering 347–358 has biased composition (polar residues); it reads SLASPSLRTSHS. The span at 362 to 371 shows a compositional bias: low complexity; it reads PGLSLQQVLP.

Belongs to the G-protein coupled receptor 1 family. As to quaternary structure, interacts with MTOR, RPTOR and NF1. Interacts with CDK5.

It localises to the cell membrane. G-protein coupled receptor for 5-hydroxytryptamine (serotonin), a biogenic hormone that functions as a neurotransmitter, a hormone and a mitogen. Also has a high affinity for tricyclic psychotropic drugs. Ligand binding causes a conformation change that triggers signaling via guanine nucleotide-binding proteins (G proteins) and modulates the activity of downstream effectors. HTR6 is coupled to G(s) G alpha proteins and mediates activation of adenylate cyclase activity. Controls pyramidal neurons migration during corticogenesis, through the regulation of CDK5 activity. Is an activator of mTOR signaling. The sequence is that of 5-hydroxytryptamine receptor 6 (HTR6) from Pan troglodytes (Chimpanzee).